A 119-amino-acid polypeptide reads, in one-letter code: Large ribosomal subunit protein bL20 (119 aa).

Belongs to the bacterial ribosomal protein bL20 family.

In terms of biological role, binds directly to 23S ribosomal RNA and is necessary for the in vitro assembly process of the 50S ribosomal subunit. It is not involved in the protein synthesizing functions of that subunit. This is Large ribosomal subunit protein bL20 from Acinetobacter baylyi (strain ATCC 33305 / BD413 / ADP1).